The sequence spans 886 residues: UPF0592 membrane protein C7D4.03c (886 aa).

The segment at 87 to 112 (ILNEPYNESPSSSSSDSSSRSTSPFS) is disordered. Residues 95-112 (SPSSSSSDSSSRSTSPFS) show a composition bias toward low complexity. A run of 3 helical transmembrane segments spans residues 277–297 (FCAS…DHFL), 374–394 (GGFF…QFSF), and 400–420 (VIYF…LTIS).

It belongs to the UPF0592 family.

The protein resides in the membrane. The polypeptide is UPF0592 membrane protein C7D4.03c (Schizosaccharomyces pombe (strain 972 / ATCC 24843) (Fission yeast)).